The chain runs to 215 residues: Pyrophosphate-energized proton pump 2 (215 aa).

5 helical membrane passes run 16–36 (VYPL…TFFV), 51–71 (GLIA…YATV), 86–106 (GTNL…IVVI), 136–156 (GLAV…GGII), and 164–184 (LFGT…IVAL).

Belongs to the H(+)-translocating pyrophosphatase (TC 3.A.10) family. Homodimer. Requires Mg(2+) as cofactor.

It is found in the cell inner membrane. It carries out the reaction diphosphate + H2O + H(+)(in) = 2 phosphate + 2 H(+)(out). Functionally, proton pump that utilizes the energy of pyrophosphate hydrolysis as the driving force for proton movement across the membrane. Generates a proton motive force. This Rhizobium leguminosarum bv. trifolii protein is Pyrophosphate-energized proton pump 2 (hppA2).